The chain runs to 297 residues: GTP-binding protein REM 1 (297 aa).

Over residues M1 to K10 the composition is skewed to polar residues. The tract at residues M1–S73 is disordered. S51 is subject to Phosphoserine. A compositionally biased stretch (low complexity) spans D64–S73. GTP contacts are provided by residues G87–T94 and N194–D197. A calmodulin-binding region spans residues A267–A286.

It belongs to the small GTPase superfamily. RGK family. As to quaternary structure, in vitro, interacts with calmodulin in a calcium-dependent manner. Interacts 14-3-3 family members including YWHAE, YWHAH, YWHAQ, YWHAZ in a phosphorylation-dependent manner. High expression in cardiac muscle. Moderate expression in lung, skeletal muscle and kidney. Low levels in spleen and brain.

Functionally, promotes endothelial cell sprouting and actin cytoskeletal reorganization. May be involved in angiogenesis. May function in Ca(2+) signaling. The protein is GTP-binding protein REM 1 (Rem1) of Mus musculus (Mouse).